The following is a 158-amino-acid chain: Ribonuclease H (158 aa).

Positions 3 to 144 (GLKQLLIFTD…CDTLAREAAE (142 aa)) constitute an RNase H type-1 domain. Residues aspartate 12, glutamate 50, aspartate 72, and aspartate 136 each coordinate Mg(2+).

The protein belongs to the RNase H family. In terms of assembly, monomer. Mg(2+) is required as a cofactor.

It localises to the cytoplasm. The catalysed reaction is Endonucleolytic cleavage to 5'-phosphomonoester.. Functionally, endonuclease that specifically degrades the RNA of RNA-DNA hybrids. This Shewanella loihica (strain ATCC BAA-1088 / PV-4) protein is Ribonuclease H.